A 540-amino-acid polypeptide reads, in one-letter code: T-complex protein 1 subunit delta (540 aa).

The span at methionine 1 to alanine 12 shows a compositional bias: low complexity. Residues methionine 1–valine 32 are disordered. Residues glycine 18–serine 31 are compositionally biased toward basic and acidic residues.

This sequence belongs to the TCP-1 chaperonin family. Heterooligomeric complex of about 850 to 900 kDa that forms two stacked rings, 12 to 16 nm in diameter.

It is found in the cytoplasm. Molecular chaperone; assists the folding of proteins upon ATP hydrolysis. Known to play a role, in vitro, in the folding of actin and tubulin. In Caenorhabditis elegans, this protein is T-complex protein 1 subunit delta (cct-4).